The following is a 290-amino-acid chain: N-acetylmannosamine kinase (290 aa).

Residues 6-13 (ALDIGGTK) and 132-139 (GVGGGIIL) contribute to the ATP site. Residues histidine 156, cysteine 166, cysteine 168, and cysteine 173 each coordinate Zn(2+).

This sequence belongs to the ROK (NagC/XylR) family. NanK subfamily. In terms of assembly, homodimer.

The enzyme catalyses an N-acyl-D-mannosamine + ATP = an N-acyl-D-mannosamine 6-phosphate + ADP + H(+). It participates in amino-sugar metabolism; N-acetylneuraminate degradation; D-fructose 6-phosphate from N-acetylneuraminate: step 2/5. Its function is as follows. Catalyzes the phosphorylation of N-acetylmannosamine (ManNAc) to ManNAc-6-P. The chain is N-acetylmannosamine kinase from Yersinia pseudotuberculosis serotype O:3 (strain YPIII).